Reading from the N-terminus, the 947-residue chain is Serine-aspartate repeat-containing protein C (947 aa).

Positions 1–50 are cleaved as a signal peptide; sequence MNNKKTATNRKGMIPNRLNKFSIRKYSVGTASILVGTTLIFGLSGHEAKA. Residues 51–164 form a disordered region; it reads AEHTNGELNQ…STTPKTTTIK (114 aa). The tract at residues 51–495 is ligand binding A region; that stretch reads AEHTNGELNQ…GSSTANGDQK (445 aa). Residues 56–71 are compositionally biased toward polar residues; it reads GELNQSKNETTAPSEN. The span at 72-83 shows a compositional bias: basic and acidic residues; sequence KTTKKVDSRQLK. Polar residues predominate over residues 84–155; the sequence is DNTQTATADQ…SNLTQAKDVS (72 aa). 2 consecutive CNA-B domains span residues 496–606 and 607–717; these read KYNL…YKTP and KYSL…EEET. The interval 678-927 is disordered; it reads TQTGTNTTED…NNSNNGTLFG (250 aa). Acidic residues-rich tracts occupy residues 685-695 and 712-886; these read TEDDKDADGGE and YYEE…DSDS. Positions 910–914 match the LPXTG sorting signal motif; the sequence is LPETG. Residues 912-927 show a composition bias toward low complexity; it reads ETGSENNNSNNGTLFG. T913 is subject to Pentaglycyl murein peptidoglycan amidated threonine. The propeptide at 914-947 is removed by sortase; that stretch reads GSENNNSNNGTLFGGLFAALGSLLLFGRRKKQNK.

Belongs to the serine-aspartate repeat-containing protein (SDr) family. As to quaternary structure, homodimerizes; via N2-Domain. Interacts with host NRXN1; this interaction mediates bacterial attachment to host cells.

It localises to the secreted. It is found in the cell wall. In terms of biological role, cell surface-associated calcium-binding protein which plays an important role in adhesion and pathogenesis. Mediates interactions with components of the extracellular matrix such as host NRXN1 to promote bacterial adhesion. The protein is Serine-aspartate repeat-containing protein C (sdrC) of Staphylococcus aureus (strain USA300).